Here is a 153-residue protein sequence, read N- to C-terminus: General odorant-binding protein lush (153 aa).

The first 29 residues, 1–29 (MKHWKRRSSAVFAIVLQVLVLLLPDPAVA), serve as a signal peptide directing secretion. Cystine bridges form between cysteine 46–cysteine 79, cysteine 75–cysteine 132, and cysteine 121–cysteine 141. Residues serine 81 and threonine 86 each contribute to the 1-propanol site. Butan-1-ol contacts are provided by serine 81 and threonine 86. Residues serine 81 and threonine 86 each contribute to the ethanol site.

This sequence belongs to the PBP/GOBP family. As to expression, specifically expressed in chemosensory system in both males and females. Expressed in a subset of trichoid chemosensory sensilla located on the ventral-lateral surface of the third antennal segment. Secreted from non-neuronal support cells into the sensillum lymph that bathes the olfactory neurons within these sensilla.

The protein resides in the secreted. Its function is as follows. Odorant-binding protein required for olfactory behavior and for activity of pheromone-sensitive neurons. Binds to alcohols and mediates avoidance behavior to high concentrations of alcohols, the alcohol-binding possibly resulting in activation of receptors on T2B neurons, the activation of these receptors inhibiting these neurons. Acts in concert with Snmp and lush to capture cVA molecules on the surface of Or67d expressing olfactory dendrites and facilitate their transfer to the odorant-receptor Orco complex. Required for cVA response, probably by binding to VA. May act by serving as an adapter that bridges the presence of gaseous pheromone molecules, cVA, to activation of specific neuronal receptors expressed on T1 olfactory neurons, possibly via a specific conformational change induced by cVA that in turn activates T1 receptors. T1 neurons are excited by the pheromone VA, while T2 neurons are inhibited by alcohols. Also binds to phthalates. The chain is General odorant-binding protein lush (lush) from Drosophila melanogaster (Fruit fly).